Reading from the N-terminus, the 127-residue chain is Snaclec CHH-B subunit alpha (127 aa).

Cystine bridges form between Cys-4-Cys-15, Cys-32-Cys-120, and Cys-95-Cys-112. Residues 11–121 enclose the C-type lectin domain; that stretch reads YDRYCYKPFK…CEQQHSFICK (111 aa).

It belongs to the snaclec family. Heterodimer of subunits alpha and beta; disulfide-linked. Expressed by the venom gland.

Its subcellular location is the secreted. In terms of biological role, binds to the subunit GPIbalpha (GP1BA) of the platelet GPIb/V/IX receptor system. It inhibits ristocetin- and vWF-induced platelet aggregation in platelet-rich plasma by inhibiting the binding of vWF to GPIbalpha. The polypeptide is Snaclec CHH-B subunit alpha (Crotalus horridus (Timber rattlesnake)).